Here is a 266-residue protein sequence, read N- to C-terminus: Glucagon-1 (266 aa).

The signal sequence occupies residues 1 to 20 (MKSTCYMIGILLMILQNTYQ). 6 consecutive propeptides follow at residues 21–50 (SPVP…LKEV), 84–95 (SGELSRRNADYE), 136–140 (NAEFE), 175–178 (IRYS), 213–224 (NFSEVHSVEEMD), and 261–266 (DLLEEQ). Positions 23 to 32 (VPETDANSRS) are enriched in polar residues. The segment at 23 to 44 (VPETDANSRSVKAARNEAVDDS) is disordered.

Belongs to the glucagon family.

Its subcellular location is the secreted. Functionally, promotes hydrolysis of glycogen and lipids, and raises the blood sugar level. The chain is Glucagon-1 (gcg1) from Xenopus laevis (African clawed frog).